The sequence spans 597 residues: Elongation factor 4 (597 aa).

The tr-type G domain maps to 2–184 (KNIRNFSIIA…SIVEHLPAPE (183 aa)). GTP-binding positions include 14 to 19 (DHGKST) and 131 to 134 (NKID).

Belongs to the TRAFAC class translation factor GTPase superfamily. Classic translation factor GTPase family. LepA subfamily.

The protein localises to the cell inner membrane. The catalysed reaction is GTP + H2O = GDP + phosphate + H(+). Functionally, required for accurate and efficient protein synthesis under certain stress conditions. May act as a fidelity factor of the translation reaction, by catalyzing a one-codon backward translocation of tRNAs on improperly translocated ribosomes. Back-translocation proceeds from a post-translocation (POST) complex to a pre-translocation (PRE) complex, thus giving elongation factor G a second chance to translocate the tRNAs correctly. Binds to ribosomes in a GTP-dependent manner. The protein is Elongation factor 4 of Desulfotalea psychrophila (strain LSv54 / DSM 12343).